The chain runs to 207 residues: Thymidylate kinase (207 aa).

10-17 is an ATP binding site; sequence GIEGSGKS.

The protein belongs to the thymidylate kinase family.

It carries out the reaction dTMP + ATP = dTDP + ADP. In terms of biological role, phosphorylation of dTMP to form dTDP in both de novo and salvage pathways of dTTP synthesis. The sequence is that of Thymidylate kinase from Halothermothrix orenii (strain H 168 / OCM 544 / DSM 9562).